Reading from the N-terminus, the 2289-residue chain is DNA polymerase II large subunit (2289 aa).

Disordered stretches follow at residues 279–330 and 544–563; these read IGSD…SPRA and SDTN…NTDD. Positions 292 to 304 are enriched in basic and acidic residues; sequence GEADIVKTDKDTN. Positions 305-318 are enriched in acidic residues; the sequence is ESETEDGIDNDDYN. Polar residues predominate over residues 544–557; it reads SDTNSASGNTSLRA. 2 consecutive DOD-type homing endonuclease domains span residues 1222 to 1367 and 1755 to 1911; these read LLGY…RLGI and LLGQ…RLGV.

The protein belongs to the archaeal DNA polymerase II family. In terms of assembly, heterodimer of a large subunit and a small subunit. Post-translationally, this protein undergoes a protein self splicing that involves a post-translational excision of the intervening region (intein) followed by peptide ligation.

The catalysed reaction is DNA(n) + a 2'-deoxyribonucleoside 5'-triphosphate = DNA(n+1) + diphosphate. It carries out the reaction Exonucleolytic cleavage in the 3'- to 5'-direction to yield nucleoside 5'-phosphates.. In terms of biological role, possesses two activities: a DNA synthesis (polymerase) and an exonucleolytic activity that degrades single-stranded DNA in the 3'- to 5'-direction. Has a template-primer preference which is characteristic of a replicative DNA polymerase. This is DNA polymerase II large subunit from Haloquadratum walsbyi (strain DSM 16790 / HBSQ001).